Here is a 234-residue protein sequence, read N- to C-terminus: Nuclear transcription factor Y subunit B-6 (234 aa).

Disordered stretches follow at residues 1–21 (MERG…TPSP) and 35–55 (MRPP…EECT). The DNA-binding element occupies 63 to 69 (MPIANVI). The segment at 90-101 (IQECVSEYISFI) is subunit association domain (SAD). The interval 206-234 (NEPNSKMSGSSSGASGARVEVFPTQQHKY) is disordered. Residues 213-222 (SGSSSGASGA) are compositionally biased toward low complexity.

It belongs to the NFYB/HAP3 subunit family. Heterotrimeric transcription factor composed of three components, NF-YA, NF-YB and NF-YC. NF-YB and NF-YC must interact and dimerize for NF-YA association and DNA binding. Interacts with PRN1. Binds directly with DPB3-1. As to expression, expressed in roots, flowers and developing siliques. Present in etiolated seedlings.

Its subcellular location is the nucleus. In terms of biological role, component of the NF-Y/HAP transcription factor complex. The NF-Y complex stimulates the transcription of various genes by recognizing and binding to a CCAAT motif in promoters. Plays a role in the regulation of the embryogenesis. Involved in the abscisic acid (ABA) signaling pathway. The chain is Nuclear transcription factor Y subunit B-6 from Arabidopsis thaliana (Mouse-ear cress).